A 279-amino-acid chain; its full sequence is MKENEKVIMEKGIHTDFKENMTYGEYLQLDSLLSSQKRLSDHHDEMLFIVIHQASELWMKLILHELNAAIESIKQDKLQPAFKMLARVSKIQSQIIQSWDILATLTPSEYIEFRDSLGQASGFQSYQYRMIEYALGYKTPHALKIYEKDPELHARLHTALHAPSLYNVAIQALVKEGFPIHKDVLNRDITQPYEEDATVEAAWLEVYADVKKYWNLYQLAEKLIDIEDWLQQWRFRHMKTVERIIGHKMGTGGSSGVSYLKRVLDQRFFPELWNVRTKL.

Substrate-binding positions include 48 to 52 (FIVIH), Y110, and R114. Residue H237 coordinates heme. Residue T251 coordinates substrate.

The protein belongs to the tryptophan 2,3-dioxygenase family. Homotetramer. Heme is required as a cofactor.

It carries out the reaction L-tryptophan + O2 = N-formyl-L-kynurenine. Its pathway is amino-acid degradation; L-tryptophan degradation via kynurenine pathway; L-kynurenine from L-tryptophan: step 1/2. Heme-dependent dioxygenase that catalyzes the oxidative cleavage of the L-tryptophan (L-Trp) pyrrole ring and converts L-tryptophan to N-formyl-L-kynurenine. Catalyzes the oxidative cleavage of the indole moiety. The sequence is that of Tryptophan 2,3-dioxygenase from Bacillus anthracis.